A 106-amino-acid chain; its full sequence is Large ribosomal subunit protein uL24 (106 aa).

The segment covering 84 to 97 (EKIGRELGAKEKAR) has biased composition (basic and acidic residues). The segment at 84–106 (EKIGRELGAKEKARLQKRKTAAK) is disordered.

The protein belongs to the universal ribosomal protein uL24 family. As to quaternary structure, part of the 50S ribosomal subunit.

In terms of biological role, one of two assembly initiator proteins, it binds directly to the 5'-end of the 23S rRNA, where it nucleates assembly of the 50S subunit. One of the proteins that surrounds the polypeptide exit tunnel on the outside of the subunit. This is Large ribosomal subunit protein uL24 from Anaeromyxobacter dehalogenans (strain 2CP-1 / ATCC BAA-258).